A 280-amino-acid polypeptide reads, in one-letter code: Acetylglutamate kinase (280 aa).

Substrate contacts are provided by residues 64–65, Arg86, and Asn177; that span reads GG.

The protein belongs to the acetylglutamate kinase family. ArgB subfamily.

The protein resides in the cytoplasm. The enzyme catalyses N-acetyl-L-glutamate + ATP = N-acetyl-L-glutamyl 5-phosphate + ADP. The protein operates within amino-acid biosynthesis; L-arginine biosynthesis; N(2)-acetyl-L-ornithine from L-glutamate: step 2/4. Catalyzes the ATP-dependent phosphorylation of N-acetyl-L-glutamate. This is Acetylglutamate kinase from Nautilia profundicola (strain ATCC BAA-1463 / DSM 18972 / AmH).